A 150-amino-acid chain; its full sequence is Small ribosomal subunit protein uS13 (150 aa).

Belongs to the universal ribosomal protein uS13 family. Part of the 30S ribosomal subunit. Forms a loose heterodimer with protein S19. Forms two bridges to the 50S subunit in the 70S ribosome.

Located at the top of the head of the 30S subunit, it contacts several helices of the 16S rRNA. In the 70S ribosome it contacts the 23S rRNA (bridge B1a) and protein L5 of the 50S subunit (bridge B1b), connecting the 2 subunits; these bridges are implicated in subunit movement. The polypeptide is Small ribosomal subunit protein uS13 (Methanocorpusculum labreanum (strain ATCC 43576 / DSM 4855 / Z)).